Here is a 285-residue protein sequence, read N- to C-terminus: Ribosomal RNA small subunit methyltransferase A (285 aa).

Positions 27, 29, 54, 75, 100, and 120 each coordinate S-adenosyl-L-methionine.

It belongs to the class I-like SAM-binding methyltransferase superfamily. rRNA adenine N(6)-methyltransferase family. RsmA subfamily.

The protein localises to the cytoplasm. It carries out the reaction adenosine(1518)/adenosine(1519) in 16S rRNA + 4 S-adenosyl-L-methionine = N(6)-dimethyladenosine(1518)/N(6)-dimethyladenosine(1519) in 16S rRNA + 4 S-adenosyl-L-homocysteine + 4 H(+). Specifically dimethylates two adjacent adenosines (A1518 and A1519) in the loop of a conserved hairpin near the 3'-end of 16S rRNA in the 30S particle. May play a critical role in biogenesis of 30S subunits. The protein is Ribosomal RNA small subunit methyltransferase A of Phenylobacterium zucineum (strain HLK1).